The sequence spans 261 residues: Chanoclavine-I dehydrogenase easD (261 aa).

A signal peptide spans 1-20 (MPSMTSKVFAITGGASGIGA). Isoleucine 18 is a binding site for NADP(+). Residue asparagine 43 is glycosylated (N-linked (GlcNAc...) asparagine). NADP(+) is bound by residues aspartate 66, arginine 132, tyrosine 166, lysine 170, and threonine 201. Residue tyrosine 166 is the Proton donor of the active site. Lysine 170 acts as the Lowers pKa of active site Tyr in catalysis.

This sequence belongs to the short-chain dehydrogenases/reductases (SDR) family. Homotetramer.

The enzyme catalyses chanoclavine-I + NAD(+) = chanoclavine-I aldehyde + NADH + H(+). It functions in the pathway alkaloid biosynthesis; ergot alkaloid biosynthesis. Functionally, chanoclavine-I dehydrogenase; part of the gene cluster that mediates the biosynthesis of fungal ergot alkaloid. DmaW catalyzes the first step of ergot alkaloid biosynthesis by condensing dimethylallyl diphosphate (DMAP) and tryptophan to form 4-dimethylallyl-L-tryptophan. The second step is catalyzed by the methyltransferase easF that methylates 4-dimethylallyl-L-tryptophan in the presence of S-adenosyl-L-methionine, resulting in the formation of 4-dimethylallyl-L-abrine. The catalase easC and the FAD-dependent oxidoreductase easE then transform 4-dimethylallyl-L-abrine to chanoclavine-I which is further oxidized by easD in the presence of NAD(+), resulting in the formation of chanoclavine-I aldehyde. Agroclavine dehydrogenase easG then mediates the conversion of chanoclavine-I aldehyde to agroclavine via a non-enzymatic adduct reaction: the substrate is an iminium intermediate that is formed spontaneously from chanoclavine-I aldehyde in the presence of glutathione. The presence of easA is not required to complete this reaction. Further conversion of agroclavine to paspalic acid is a two-step process involving oxidation of agroclavine to elymoclavine and of elymoclavine to paspalic acid, the second step being performed by the elymoclavine oxidase cloA. Paspalic acid is then further converted to D-lysergic acid. Ergopeptines are assembled from D-lysergic acid and three different amino acids by the D-lysergyl-peptide-synthetases composed each of a monomudular and a trimodular nonribosomal peptide synthetase subunit. LpsB and lpsC encode the monomodular subunits responsible for D-lysergic acid activation and incorporation into the ergopeptine backbone. LpsA1 and A2 subunits encode the trimodular nonribosomal peptide synthetase assembling the tripeptide portion of ergopeptines. LpsA1 is responsible for formation of the major ergopeptine, ergotamine, and lpsA2 for alpha-ergocryptine, the minor ergopeptine of the total alkaloid mixture elaborated by C.purpurea. D-lysergyl-tripeptides are assembled by the nonribosomal peptide synthetases and released as N-(D-lysergyl-aminoacyl)-lactams. Cyclolization of the D-lysergyl-tripeptides is performed by the Fe(2+)/2-ketoglutarate-dependent dioxygenase easH which introduces a hydroxyl group into N-(D-lysergyl-aminoacyl)-lactam at alpha-C of the aminoacyl residue followed by spontaneous condensation with the terminal lactam carbonyl group. The protein is Chanoclavine-I dehydrogenase easD of Claviceps purpurea (Ergot fungus).